A 369-amino-acid polypeptide reads, in one-letter code: UPF0284 protein cce_1085 (369 aa).

This sequence belongs to the UPF0284 family.

This is UPF0284 protein cce_1085 from Crocosphaera subtropica (strain ATCC 51142 / BH68) (Cyanothece sp. (strain ATCC 51142)).